Reading from the N-terminus, the 593-residue chain is Aspartate--tRNA(Asp/Asn) ligase (593 aa).

Residue glutamate 175 participates in L-aspartate binding. An aspartate region spans residues 199–202 (QQYK). Residues arginine 221 and histidine 452 each contribute to the L-aspartate site. 221–223 (RDE) contacts ATP. Glutamate 486 serves as a coordination point for ATP. Arginine 493 provides a ligand contact to L-aspartate. 538-541 (GVDR) provides a ligand contact to ATP.

Belongs to the class-II aminoacyl-tRNA synthetase family. Type 1 subfamily. In terms of assembly, homodimer.

The protein localises to the cytoplasm. The catalysed reaction is tRNA(Asx) + L-aspartate + ATP = L-aspartyl-tRNA(Asx) + AMP + diphosphate. Functionally, aspartyl-tRNA synthetase with relaxed tRNA specificity since it is able to aspartylate not only its cognate tRNA(Asp) but also tRNA(Asn). Reaction proceeds in two steps: L-aspartate is first activated by ATP to form Asp-AMP and then transferred to the acceptor end of tRNA(Asp/Asn). The polypeptide is Aspartate--tRNA(Asp/Asn) ligase (Novosphingobium aromaticivorans (strain ATCC 700278 / DSM 12444 / CCUG 56034 / CIP 105152 / NBRC 16084 / F199)).